A 404-amino-acid chain; its full sequence is O-methyltransferase GME11366 (404 aa).

S-adenosyl-L-methionine-binding positions include glycine 237–glycine 238, aspartate 262, arginine 301, and arginine 302. Histidine 305 acts as the Proton acceptor in catalysis.

Belongs to the class I-like SAM-binding methyltransferase superfamily. Cation-independent O-methyltransferase family.

Its pathway is secondary metabolite biosynthesis. O-methyltransferase; part of the gene cluster that mediates the biosynthesis of dibenzodioxocinones such as pestalotiollide B, a novel class of inhibitors against cholesterol ester transfer protein (CEPT). The biosynthesis initiates from condensation of acetate and malonate units catalyzed by the non-reducing PKS pks8/GME11356. Pks8/GME11356 lacks a thioesterase (TE) domain, which is important to the cyclizing of the third ring of atrochrysone carboxylic acid, and the esterase GME11355 might play the role of TE and catalyzes the cyclization reaction of the C ring. The lactamase-like protein GME11357 (or other beta-lactamases in Pestalotiopsis microspora) probably hydrolyzes the thioester bond between the ACP of pks8/GME11356 and the intermediate to release atrochrysone carboxylic acid, which is spontaneously dehydrates to form endocrocin anthrone. Endocrocin anthrone is further converted to emodin via the endocrocin intermediate. Emodin is then oxidized by several enzymes such as the Baeyer-Villiger oxidase GME11358, the oxidoreductase GME11367, the short chain dehydrogenase/reductase GME11373, as well as by other oxidoreductases from the cluster, to modify the A and C rings and open the B ring, and finally yield monodictyphenone. The prenyltransferase GME11375 may catalyze the addition reaction between the C5 side chains and the carbon bone of dibenzodioxocinones. The remaining biochemical reactions to the final product dibenzodioxocinones should be methylation catalyzed by methyltransferase GME11366 and reduction and lactonization reaction catalyzed by a series of oxidordeuctases. The sequence is that of O-methyltransferase GME11366 from Pestalotiopsis microspora.